Here is a 321-residue protein sequence, read N- to C-terminus: Probable protein phosphatase 2C 44 (321 aa).

Disordered stretches follow at residues 1–36 (MVGRMERQSASSSASCSPSSSAAGTSSSSSACGGKK) and 51–70 (NSSSTDTGKGRSKQSSNKVT). Over residues 9–31 (SASSSASCSPSSSAAGTSSSSSA) the composition is skewed to low complexity. Residues 51 to 69 (NSSSTDTGKGRSKQSSNKV) show a composition bias toward polar residues. The PPM-type phosphatase domain maps to 70–319 (THGFHLVEGK…DDISCIVIRF (250 aa)). Asp107, Gly108, Asp271, and Asp310 together coordinate Mn(2+).

Belongs to the PP2C family. Requires Mg(2+) as cofactor. Mn(2+) serves as cofactor.

The catalysed reaction is O-phospho-L-seryl-[protein] + H2O = L-seryl-[protein] + phosphate. The enzyme catalyses O-phospho-L-threonyl-[protein] + H2O = L-threonyl-[protein] + phosphate. This chain is Probable protein phosphatase 2C 44, found in Oryza sativa subsp. japonica (Rice).